The primary structure comprises 110 residues: Protein RnfH (110 aa).

The disordered stretch occupies residues 90–110; that stretch reads VDKTRREGSIEGRKWLPKDSR.

This sequence belongs to the UPF0125 (RnfH) family.

The chain is Protein RnfH from Burkholderia mallei (strain NCTC 10229).